Consider the following 404-residue polypeptide: Formate-dependent phosphoribosylglycinamide formyltransferase (404 aa).

N(1)-(5-phospho-beta-D-ribosyl)glycinamide-binding positions include 25–26 and Glu85; that span reads EL. ATP is bound by residues Arg118, Lys159, 164-169, 199-202, and Glu207; these read SSGKGQ and EGFI. Residues 123–318 form the ATP-grasp domain; sequence RLAAEELGLP…EFELHARAIL (196 aa). Mg(2+) contacts are provided by Glu277 and Glu289. N(1)-(5-phospho-beta-D-ribosyl)glycinamide is bound by residues Asp296, Lys365, and 372 to 373; that span reads RR.

Belongs to the PurK/PurT family. Homodimer.

The catalysed reaction is N(1)-(5-phospho-beta-D-ribosyl)glycinamide + formate + ATP = N(2)-formyl-N(1)-(5-phospho-beta-D-ribosyl)glycinamide + ADP + phosphate + H(+). The protein operates within purine metabolism; IMP biosynthesis via de novo pathway; N(2)-formyl-N(1)-(5-phospho-D-ribosyl)glycinamide from N(1)-(5-phospho-D-ribosyl)glycinamide (formate route): step 1/1. Its function is as follows. Involved in the de novo purine biosynthesis. Catalyzes the transfer of formate to 5-phospho-ribosyl-glycinamide (GAR), producing 5-phospho-ribosyl-N-formylglycinamide (FGAR). Formate is provided by PurU via hydrolysis of 10-formyl-tetrahydrofolate. The sequence is that of Formate-dependent phosphoribosylglycinamide formyltransferase from Burkholderia lata (strain ATCC 17760 / DSM 23089 / LMG 22485 / NCIMB 9086 / R18194 / 383).